A 201-amino-acid chain; its full sequence is 3-isopropylmalate dehydratase small subunit (201 aa).

This sequence belongs to the LeuD family. LeuD type 1 subfamily. In terms of assembly, heterodimer of LeuC and LeuD.

It carries out the reaction (2R,3S)-3-isopropylmalate = (2S)-2-isopropylmalate. Its pathway is amino-acid biosynthesis; L-leucine biosynthesis; L-leucine from 3-methyl-2-oxobutanoate: step 2/4. Its function is as follows. Catalyzes the isomerization between 2-isopropylmalate and 3-isopropylmalate, via the formation of 2-isopropylmaleate. This chain is 3-isopropylmalate dehydratase small subunit, found in Escherichia coli O9:H4 (strain HS).